We begin with the raw amino-acid sequence, 277 residues long: Large ribosomal subunit protein uL2c (277 aa).

The segment at 228–254 (VDHPHGGGEGRCPVGHAQPRTPWGKPA) is disordered.

Belongs to the universal ribosomal protein uL2 family. As to quaternary structure, part of the 50S ribosomal subunit.

It localises to the plastid. The protein localises to the chloroplast. This Ostreococcus tauri protein is Large ribosomal subunit protein uL2c (rpl2).